Consider the following 322-residue polypeptide: Hydrolase C26A3.11 (322 aa).

Residues 44–290 (FRIGLVQLAN…PSIVYADIDP (247 aa)) enclose the CN hydrolase domain. The active-site Proton acceptor is E83. Catalysis depends on K154, which acts as the Proton donor. C195 serves as the catalytic Nucleophile.

This sequence belongs to the carbon-nitrogen hydrolase superfamily. NIT1/NIT2 family.

The protein is Hydrolase C26A3.11 of Schizosaccharomyces pombe (strain 972 / ATCC 24843) (Fission yeast).